The primary structure comprises 311 residues: Ribosomal RNA small subunit methyltransferase H (311 aa).

S-adenosyl-L-methionine-binding positions include 39-41 (GGH), D59, F87, D102, and H109.

It belongs to the methyltransferase superfamily. RsmH family.

It localises to the cytoplasm. The catalysed reaction is cytidine(1402) in 16S rRNA + S-adenosyl-L-methionine = N(4)-methylcytidine(1402) in 16S rRNA + S-adenosyl-L-homocysteine + H(+). Its function is as follows. Specifically methylates the N4 position of cytidine in position 1402 (C1402) of 16S rRNA. This chain is Ribosomal RNA small subunit methyltransferase H, found in Porphyromonas gingivalis (strain ATCC 33277 / DSM 20709 / CIP 103683 / JCM 12257 / NCTC 11834 / 2561).